We begin with the raw amino-acid sequence, 89 residues long: Large ribosomal subunit protein uL23cz/uL23cy (89 aa).

Belongs to the universal ribosomal protein uL23 family. In terms of assembly, part of the 50S ribosomal subunit.

Its subcellular location is the plastid. It is found in the chloroplast. Its function is as follows. Binds to 23S rRNA. The polypeptide is Large ribosomal subunit protein uL23cz/uL23cy (rpl23-A) (Pelargonium hortorum (Common geranium)).